We begin with the raw amino-acid sequence, 96 residues long: Putative septation protein SpoVG (96 aa).

This sequence belongs to the SpoVG family.

Functionally, could be involved in septation. In Clostridium kluyveri (strain ATCC 8527 / DSM 555 / NBRC 12016 / NCIMB 10680 / K1), this protein is Putative septation protein SpoVG.